The following is a 354-amino-acid chain: MDPNQRIARISAHLNPPNLHNQIADGSGLNRVACRAKGGSPGFKVAILGAAGGIGQPLAMLMKMNPLVSVLHLYDVANAPGVTADISHMDTSAVVRGFLGQPQLEEALTGMDLVIIPAGVPRKPGMTRDDLFNINAGIVRTLSEAIAKCCPKAIVNIISNPVNSTVPIAAEVFKKAGTFDPKKLMGVTMLDVVRANTFVAEVMSLDPREVEVPVVGGHAGVTILPLLSQVKPPCSFTQKEIEYLTDRIQNGGTEVVEAKAGAGSATLSMAYAAVEFADACLRGLRGDANIVECAYVASHVTELPFFASKVRLGRCGIDEVYGLGPLNEYERMGLEKAKKELSVSIHKGVTFAKK.

A peroxisomal targeting signal PTS2 region spans residues 6–14 (RIARISAHL). NAD(+) contacts are provided by residues 49–55 (GAAGGIG) and D75. Substrate contacts are provided by R122 and R128. NAD(+) is bound by residues N135 and 158-160 (ISN). Positions 160 and 194 each coordinate substrate. H218 acts as the Proton acceptor in catalysis. An NAD(+)-binding site is contributed by M269.

The protein belongs to the LDH/MDH superfamily. MDH type 1 family. As to quaternary structure, homodimer. In terms of tissue distribution, expressed in rosette leaves at low levels.

The protein resides in the peroxisome. It carries out the reaction (S)-malate + NAD(+) = oxaloacetate + NADH + H(+). Functionally, catalyzes a reversible NAD-dependent dehydrogenase reaction involved in central metabolism and redox homeostasis between organelle compartments. Peroxisomal NAD-dependent malate dehydrogenase involved in fatty acid beta-oxidation. Reoxidizes NADH from the beta-oxidation and provides NAD for the conversion of fatty acyl-CoA to acetyl-CoA. Does not participate directly in the glyoxylate cycle. Required for maintenance of photosynthetic rates under photorespiratory conditions, and carbon flow during photorespiration. Supplies NADH reductant to the peroxisomal hydroxypyruvate reductase (HPR), which reduces hydroxypyruvate into glycerate in the photorespiratory cycle. The protein is Malate dehydrogenase 1, peroxisomal of Arabidopsis thaliana (Mouse-ear cress).